Consider the following 317-residue polypeptide: Transaldolase (317 aa).

The Schiff-base intermediate with substrate role is filled by Lys-132.

This sequence belongs to the transaldolase family. Type 1 subfamily. Homodimer.

It is found in the cytoplasm. The catalysed reaction is D-sedoheptulose 7-phosphate + D-glyceraldehyde 3-phosphate = D-erythrose 4-phosphate + beta-D-fructose 6-phosphate. It functions in the pathway carbohydrate degradation; pentose phosphate pathway; D-glyceraldehyde 3-phosphate and beta-D-fructose 6-phosphate from D-ribose 5-phosphate and D-xylulose 5-phosphate (non-oxidative stage): step 2/3. Functionally, transaldolase is important for the balance of metabolites in the pentose-phosphate pathway. The polypeptide is Transaldolase (Pseudoalteromonas atlantica (strain T6c / ATCC BAA-1087)).